The sequence spans 62 residues: Chromatin protein Cren7 2 (62 aa).

It belongs to the Cren7 family. In terms of assembly, monomer. Methylated at multiple sites, to varying extents.

The protein localises to the chromosome. Its subcellular location is the cytoplasm. In terms of biological role, a chromatin protein, binds double-stranded DNA without sequence specificity. Constrains negative DNA supercoils. This Hyperthermus butylicus (strain DSM 5456 / JCM 9403 / PLM1-5) protein is Chromatin protein Cren7 2 (cren7-2).